The primary structure comprises 498 residues: Glycerol kinase (498 aa).

Residue Thr-12 coordinates ADP. Positions 12, 13, and 14 each coordinate ATP. Thr-12 provides a ligand contact to sn-glycerol 3-phosphate. ADP is bound at residue Arg-16. 4 residues coordinate sn-glycerol 3-phosphate: Arg-82, Glu-83, Tyr-134, and Asp-241. Residues Arg-82, Glu-83, Tyr-134, Asp-241, and Gln-242 each coordinate glycerol. Thr-263 and Gly-310 together coordinate ADP. Thr-263, Gly-310, Gln-314, and Gly-411 together coordinate ATP. Residues Gly-411 and Asn-415 each contribute to the ADP site.

This sequence belongs to the FGGY kinase family.

It carries out the reaction glycerol + ATP = sn-glycerol 3-phosphate + ADP + H(+). The protein operates within polyol metabolism; glycerol degradation via glycerol kinase pathway; sn-glycerol 3-phosphate from glycerol: step 1/1. Its activity is regulated as follows. Inhibited by fructose 1,6-bisphosphate (FBP). Functionally, key enzyme in the regulation of glycerol uptake and metabolism. Catalyzes the phosphorylation of glycerol to yield sn-glycerol 3-phosphate. The chain is Glycerol kinase from Janthinobacterium sp. (strain Marseille) (Minibacterium massiliensis).